Here is a 608-residue protein sequence, read N- to C-terminus: Nuclear protein localization protein 4 homolog (608 aa).

Ala2 carries the post-translational modification N-acetylalanine. Lys179 is subject to N6-acetyllysine. The MPN domain maps to Ile226 to Phe363. The RanBP2-type zinc finger occupies Thr580 to Thr608.

It belongs to the NPL4 family. In terms of assembly, heterodimer with UFD1. The heterodimer binds ubiquitinated proteins. The heterodimer binds to VCP and inhibits Golgi membrane fusion. Interacts with ZFAND2B; probably through VCP.

Its subcellular location is the cytoplasm. The protein localises to the cytosol. It localises to the endoplasmic reticulum. It is found in the nucleus. Its pathway is protein degradation; proteasomal ubiquitin-dependent pathway. Functionally, the ternary complex containing UFD1, VCP and NPLOC4 binds ubiquitinated proteins and is necessary for the export of misfolded proteins from the ER to the cytoplasm, where they are degraded by the proteasome. The NPLOC4-UFD1-VCP complex regulates spindle disassembly at the end of mitosis and is necessary for the formation of a closed nuclear envelope. Acts as a negative regulator of type I interferon production via the complex formed with VCP and UFD1, which binds to RIGI and recruits RNF125 to promote ubiquitination and degradation of RIGI. The sequence is that of Nuclear protein localization protein 4 homolog (Nploc4) from Mus musculus (Mouse).